The sequence spans 269 residues: MVRIAVAGAAGRMGRNLVKAAHHNPVAKVAAGSERPESSLVGVDLGELCGEGKFDVVVCDDLAKQIDQFDVIIDFTAPASTLNNLALCQQYGKSIVIGTTGFTEEQREQIDLVAQQVPVVMAPNYSVGVNLVFKLLEKAAKVMGDYCDIEIVEAHHRHKVDAPSGTAIGMGEAIAGAMGNKLSDVAVYAREGITGERTKDEIGFATIRAGDIVGEHTAMFADIGERVEITHKATDRMTFANGAVKAAVWLHEKPAGFYTMTDVLGLNDL.

Residues 8-13 (GAAGRM) and Glu34 contribute to the NAD(+) site. Arg35 is a binding site for NADP(+). Residues 98–100 (GTT) and 122–125 (APNY) each bind NAD(+). The active-site Proton donor/acceptor is His155. Residue His156 participates in (S)-2,3,4,5-tetrahydrodipicolinate binding. The Proton donor role is filled by Lys159. A (S)-2,3,4,5-tetrahydrodipicolinate-binding site is contributed by 165-166 (GT).

The protein belongs to the DapB family.

Its subcellular location is the cytoplasm. The catalysed reaction is (S)-2,3,4,5-tetrahydrodipicolinate + NAD(+) + H2O = (2S,4S)-4-hydroxy-2,3,4,5-tetrahydrodipicolinate + NADH + H(+). The enzyme catalyses (S)-2,3,4,5-tetrahydrodipicolinate + NADP(+) + H2O = (2S,4S)-4-hydroxy-2,3,4,5-tetrahydrodipicolinate + NADPH + H(+). It functions in the pathway amino-acid biosynthesis; L-lysine biosynthesis via DAP pathway; (S)-tetrahydrodipicolinate from L-aspartate: step 4/4. In terms of biological role, catalyzes the conversion of 4-hydroxy-tetrahydrodipicolinate (HTPA) to tetrahydrodipicolinate. In Vibrio vulnificus (strain CMCP6), this protein is 4-hydroxy-tetrahydrodipicolinate reductase.